Here is a 157-residue protein sequence, read N- to C-terminus: Cysteine protease Nivulian-2 (157 aa).

The protein belongs to the intron maturase 2 family. MatK subfamily. In terms of assembly, monomer. Post-translationally, glycosylated. As to expression, accumulates in latex (at protein level).

Inhibited by HgCl(2), iodoacetamide (IAA) and, to a far lesser extent, by SDS, hydrogen peroxide H(1)O(2), KCl, NaCl, ZnCl(2), AgSO(4), CdCl(2), FeCl(3), PMSF, Pepstatin A and EDTA. Repressed moderately by many organic solvents such as diethyl ether, ethy lacetate, acetophenone, butanol, trichloroethylene, tetrahydrofuran, methanol, chloroform and dichloromethane, and, to a lesser extent, by propanol, benzyl alcohol and chlorobenzene. In terms of biological role, cysteine protease inducing milk clotting by cleaving casein. Exhibits biomedical activities such as wound healing, haemostatic and antibacterial activity, as well as agricultural application in biocontrol process against the infectious management of the root knot nematode Meloidogyne incognita. In Euphorbia nivulia (Leafy milk hedge), this protein is Cysteine protease Nivulian-2.